The chain runs to 250 residues: Menaquinol:cytochrome c reductase cytochrome c subunit (250 aa).

3 consecutive transmembrane segments (helical) span residues 46–62 (WLVGSVFLVGFLCLTVA), 104–124 (VIGAIVMPGLAFGALLLAPFL), and 137–157 (VATGMMLLTLAAIVYLTWESV). Positions 178 to 250 (DTNAEGYKIA…LQKMANSSPA (73 aa)) constitute a Cytochrome c domain. The heme c site is built by C192, C195, and H196. Positions 229–250 (MPGGIFKGTDEELQKMANSSPA) are disordered.

It belongs to the cytochrome b family. As to quaternary structure, the main subunits of the menaquinol:cytochrome c complex are a Rieske-type iron-sulfur protein (QcrA), a cytochrome b (QcrB) and a cytochrome c (QcrC). The cofactor is heme c.

The protein localises to the cell membrane. Its function is as follows. Component of the menaquinol:cytochrome c reductase complex. In Geobacillus thermodenitrificans, this protein is Menaquinol:cytochrome c reductase cytochrome c subunit (qcrC).